We begin with the raw amino-acid sequence, 580 residues long: TRAF-type zinc finger domain-containing protein 1 (580 aa).

Ala-2 bears the N-acetylalanine mark. Residues 27 to 103 (IHEIHCQRNI…DLELSVLKLK (77 aa)) form a TRAF-type zinc finger. Ser-190 is modified (phosphoserine). Over residues 197–209 (TTNQRSMTAQFPI) the composition is skewed to polar residues. The disordered stretch occupies residues 197 to 236 (TTNQRSMTAQFPIQNNLLEEQERQERNRSRQTPKERGEDS). The span at 216-235 (EQERQERNRSRQTPKERGED) shows a compositional bias: basic and acidic residues. 3 positions are modified to phosphoserine: Ser-326, Ser-414, and Ser-429. Residues 392 to 580 (PATANNHVSE…GAGDAEEEEE (189 aa)) form a disordered region. The span at 409-419 (QPRETSPELPK) shows a compositional bias: basic and acidic residues. A compositionally biased stretch (low complexity) spans 453–463 (PPNNTTAPPNR). Ser-469 is modified (phosphoserine).

Interacts with MAVS, TICAM1, TRAF1, TRAF2, TRAF3 and TRAF6.

Its function is as follows. Negative feedback regulator that controls excessive innate immune responses. Regulates both Toll-like receptor 4 (TLR4) and DDX58/RIG1-like helicases (RLH) pathways. May inhibit the LTR pathway by direct interaction with TRAF6 and attenuation of NF-kappa-B activation. May negatively regulate the RLH pathway downstream from MAVS and upstream of NF-kappa-B and IRF3. This is TRAF-type zinc finger domain-containing protein 1 (TRAFD1) from Bos taurus (Bovine).